A 377-amino-acid chain; its full sequence is Homoserine O-acetyltransferase (377 aa).

Residues N48–E347 form the AB hydrolase-1 domain. The active-site Nucleophile is the S143. R213 lines the substrate pocket. Residues D311 and H341 contribute to the active site. D342 provides a ligand contact to substrate.

It belongs to the AB hydrolase superfamily. MetX family. Homodimer.

It is found in the cytoplasm. It catalyses the reaction L-homoserine + acetyl-CoA = O-acetyl-L-homoserine + CoA. It functions in the pathway amino-acid biosynthesis; L-methionine biosynthesis via de novo pathway; O-acetyl-L-homoserine from L-homoserine: step 1/1. Functionally, transfers an acetyl group from acetyl-CoA to L-homoserine, forming acetyl-L-homoserine. In Corynebacterium efficiens (strain DSM 44549 / YS-314 / AJ 12310 / JCM 11189 / NBRC 100395), this protein is Homoserine O-acetyltransferase.